A 278-amino-acid chain; its full sequence is Ras-related protein rapC (278 aa).

10–17 (GASGTGKT) lines the GTP pocket. The Effector region motif lies at 32–40 (YDPTIEDLY). GTP contacts are provided by residues 58 to 62 (DTSGT) and 119 to 122 (NKCD). Disordered stretches follow at residues 176–209 (NGSSNGKDKKDKKEKKTHKKDSGSNNSSINSSSS) and 236–278 (STSS…CLIM). 2 stretches are compositionally biased toward low complexity: residues 198–209 (GSNNSSINSSSS) and 236–251 (STSSTSVNNLNQSQTN). Cys-275 bears the Cysteine methyl ester mark. The S-geranylgeranyl cysteine moiety is linked to residue Cys-275. Positions 276 to 278 (LIM) are cleaved as a propeptide — removed in mature form.

It belongs to the small GTPase superfamily. Ras family.

The protein localises to the cell membrane. The enzyme catalyses GTP + H2O = GDP + phosphate + H(+). The polypeptide is Ras-related protein rapC (rapC) (Dictyostelium discoideum (Social amoeba)).